The following is a 170-amino-acid chain: MDHDHMHGMPRPSSSSSSSPSSMMNNGSMNEGGGHHHMKMMMHMTFFWGKNTEVLFSGWPGTSSGMYALCLIFVFFLAVLTEWLAHSSLLRGSTGDSANRAAGLIQTAVYTLRIGLAYLVMLAVMSFNAGVFLVALAGHAVGFMLFGSQTFRNTSDDRKTNYVPPSGCAC.

A disordered region spans residues 1-29 (MDHDHMHGMPRPSSSSSSSPSSMMNNGSM). Low complexity predominate over residues 9-29 (MPRPSSSSSSSPSSMMNNGSM). 2 helical membrane-spanning segments follow: residues 65–85 (GMYA…EWLA) and 114–134 (IGLA…VFLV).

The protein belongs to the copper transporter (Ctr) (TC 1.A.56) family. SLC31A subfamily. As to expression, expressed in the root apex, lateral root primordia, embryo, trichomes, guard cells and pollen grains.

The protein localises to the membrane. Functionally, copper transporter involved in copper acquisition and transport in leaves. Required for copper homeostasis and normal plant growth and development. The sequence is that of Copper transporter 1 (COPT1) from Arabidopsis thaliana (Mouse-ear cress).